Here is a 284-residue protein sequence, read N- to C-terminus: NAD kinase (284 aa).

Catalysis depends on Asp-60, which acts as the Proton acceptor. NAD(+) contacts are provided by residues 60-61 (DG), 134-135 (NE), Arg-145, Lys-162, Asp-164, 175-180 (TAYSFS), and Gln-234.

It belongs to the NAD kinase family. Requires a divalent metal cation as cofactor.

It localises to the cytoplasm. The catalysed reaction is NAD(+) + ATP = ADP + NADP(+) + H(+). In terms of biological role, involved in the regulation of the intracellular balance of NAD and NADP, and is a key enzyme in the biosynthesis of NADP. Catalyzes specifically the phosphorylation on 2'-hydroxyl of the adenosine moiety of NAD to yield NADP. The protein is NAD kinase of Clostridium botulinum (strain Eklund 17B / Type B).